An 887-amino-acid chain; its full sequence is Pre-mRNA-splicing factor cwf22 (887 aa).

The tract at residues M1–R27 is disordered. In terms of domain architecture, MIF4G spans K124–K307. Residues I366–V401 form a disordered region. Residues G368 to V394 are compositionally biased toward acidic residues. The MI domain maps to N411–L527. 2 disordered regions span residues M607–H834 and G867–D887. Residues E618–S662 are compositionally biased toward low complexity. A Phosphoserine modification is found at S662. At T664 the chain carries Phosphothreonine. Over residues K677 to S690 the composition is skewed to basic and acidic residues. Positions N691–Y712 are enriched in low complexity. Residues R717–Y726 show a composition bias toward basic and acidic residues. Residues R736 to R746 show a composition bias toward basic residues. Composition is skewed to low complexity over residues S747 to P762 and S769 to P791. A compositionally biased stretch (polar residues) spans D799–P809.

The protein belongs to the CWC22 family. In terms of assembly, belongs to the 40S cdc5-associated complex (or cwf complex), a spliceosome sub-complex reminiscent of a late-stage spliceosome composed of the U2, U5 and U6 snRNAs and at least brr2, cdc5, cwf2/prp3, cwf3/syf1, cwf4/syf3, cwf5/ecm2, spp42/cwf6, cwf7/spf27, cwf8, cwf9, cwf10, cwf11, cwf12, prp45/cwf13, cwf14, cwf15, cwf16, cwf17, cwf18, cwf19, cwf20, cwf21, cwf22, cwf23, cwf24, cwf25, cwf26, cyp7/cwf27, cwf28, cwf29/ist3, lea1, msl1, prp5/cwf1, prp10, prp12/sap130, prp17, prp22, sap61, sap62, sap114, sap145, slu7, smb1, smd1, smd3, smf1, smg1 and syf2.

It localises to the cytoplasm. The protein localises to the nucleus. Functionally, may be involved in pre-mRNA splicing. In Schizosaccharomyces pombe (strain 972 / ATCC 24843) (Fission yeast), this protein is Pre-mRNA-splicing factor cwf22 (cwf22).